Reading from the N-terminus, the 219-residue chain is Small ribosomal subunit protein uS5 (219 aa).

The region spanning 52–115 (LDDEVLDINM…DVAKLNLISV (64 aa)) is the S5 DRBM domain. The disordered stretch occupies residues 196–219 (LRNASQSRTPRRAAAKQREQEVSE).

It belongs to the universal ribosomal protein uS5 family. Part of the 30S ribosomal subunit. Contacts protein S4.

Functionally, with S4 and S12 plays an important role in translational accuracy. The protein is Small ribosomal subunit protein uS5 of Haloquadratum walsbyi (strain DSM 16790 / HBSQ001).